Reading from the N-terminus, the 603-residue chain is MPELYTEDFIQGCDVGELQEPGLPGVLSYVGAQERALDHRKPSTSSKKTKRVEIDQRCENRLECNGAISAHCNLRLPDSNDSPASASRVAGITDLSRNCVIKELAPQQEGNPGEVFHTVTLEQHEKHDIEEFCFREIKKKIHDFDCQWRDDERNCNKVTTAPKENLTCRRDQRDRRGIGNKSIKHQLGLSFLPHPHELQQFQAEGKIYECNHVEKSVNHGSSVSPPQIISSTIKTHVSNKYGTDFICSSLLTQEQKSCIREKPYRYIECDKALNHGSHMTVRQVSHSGEKGYKCDLCGKVFSQKSNLARHWRVHTGEKPYKCNECDRSFSRNSCLALHRRVHTGEKPYKCYECDKVFSRNSCLALHQKTHIGEKPYTCKECGKAFSVRSTLTNHQVIHSGKKPYKCNECGKVFSQTSSLATHQRIHTGEKPYKCNECGKVFSQTSSLARHWRIHTGEKPYKCNECGKVFSYNSHLASHRRVHTGEKPYKCNECGKAFSVHSNLTTHQVIHTGEKPYKCNQCGKGFSVHSSLTTHQVIHTGEKPYKCNECGKSFSVRPNLTRHQIIHTGKKPYKCSDCGKSFSVRPNLFRHQIIHTKEKPYKRN.

Residues 264–286 (YRYIECDKALNHGSHMTVRQVSH) form a C2H2-type 1; degenerate zinc finger. 11 consecutive C2H2-type zinc fingers follow at residues 292–314 (YKCD…WRVH), 320–342 (YKCN…RRVH), 348–370 (YKCY…QKTH), 376–398 (YTCK…QVIH), 404–426 (YKCN…QRIH), 432–454 (YKCN…WRIH), 460–482 (YKCN…RRVH), 488–510 (YKCN…QVIH), 516–538 (YKCN…QVIH), 544–566 (YKCN…QIIH), and 572–594 (YKCS…QIIH).

In terms of tissue distribution, expressed in all tissues examined. Isoforms are differentially expressed. Isoform 3 and isoform 5 were highly expressed, isoform 4 moderately expressed, isoform 2 lower expression, the lowest expression level was seem with isoform 1.

Its subcellular location is the nucleus. The protein resides in the cytoplasm. Functionally, involved in transcriptional regulation. Transcriptional activity differed among the various isoforms. All isoforms except isoform 3 seem to suppresses the transcriptional activities of AP-1 and p53/TP53. The sequence is that of Zinc finger protein 415 (ZNF415) from Homo sapiens (Human).